A 225-amino-acid chain; its full sequence is UPF0758 protein SZO_09140 (225 aa).

In terms of domain architecture, MPN spans 102–224 (PVLSSAQVAE…YYSFREKSDL (123 aa)). Residues H173, H175, and D186 each coordinate Zn(2+). A JAMM motif motif is present at residues 173–186 (HNHPSGLTKPSAND).

Belongs to the UPF0758 family.

In Streptococcus equi subsp. zooepidemicus (strain H70), this protein is UPF0758 protein SZO_09140.